A 187-amino-acid polypeptide reads, in one-letter code: UPF0215 protein PAE0952 (187 aa).

The protein belongs to the UPF0215 family.

This Pyrobaculum aerophilum (strain ATCC 51768 / DSM 7523 / JCM 9630 / CIP 104966 / NBRC 100827 / IM2) protein is UPF0215 protein PAE0952.